A 164-amino-acid chain; its full sequence is Putative 4-hydroxy-4-methyl-2-oxoglutarate aldolase (164 aa).

Substrate is bound by residues 80 to 83 and Arg102; that span reads GGNL. Asp103 contributes to the a divalent metal cation binding site.

Belongs to the class II aldolase/RraA-like family. Homotrimer. A divalent metal cation is required as a cofactor.

It catalyses the reaction 4-hydroxy-4-methyl-2-oxoglutarate = 2 pyruvate. The enzyme catalyses oxaloacetate + H(+) = pyruvate + CO2. Catalyzes the aldol cleavage of 4-hydroxy-4-methyl-2-oxoglutarate (HMG) into 2 molecules of pyruvate. Also contains a secondary oxaloacetate (OAA) decarboxylase activity due to the common pyruvate enolate transition state formed following C-C bond cleavage in the retro-aldol and decarboxylation reactions. This Burkholderia multivorans (strain ATCC 17616 / 249) protein is Putative 4-hydroxy-4-methyl-2-oxoglutarate aldolase.